The following is a 309-amino-acid chain: tRNA dimethylallyltransferase (309 aa).

Glycine 9–threonine 16 is a binding site for ATP. Threonine 11 to threonine 16 lines the substrate pocket. Positions aspartate 34–glutamine 37 are interaction with substrate tRNA.

This sequence belongs to the IPP transferase family. As to quaternary structure, monomer. Requires Mg(2+) as cofactor.

It carries out the reaction adenosine(37) in tRNA + dimethylallyl diphosphate = N(6)-dimethylallyladenosine(37) in tRNA + diphosphate. Functionally, catalyzes the transfer of a dimethylallyl group onto the adenine at position 37 in tRNAs that read codons beginning with uridine, leading to the formation of N6-(dimethylallyl)adenosine (i(6)A). This Clostridium acetobutylicum (strain ATCC 824 / DSM 792 / JCM 1419 / IAM 19013 / LMG 5710 / NBRC 13948 / NRRL B-527 / VKM B-1787 / 2291 / W) protein is tRNA dimethylallyltransferase.